Consider the following 103-residue polypeptide: Cytochrome c-552 (103 aa).

Positions 1–22 (MKTAWLGTFAASALLVAGYAQA) are cleaved as a signal peptide. The heme c site is built by Cys32, Cys35, His36, and Met81.

As to quaternary structure, monomer. Binds 1 heme c group covalently per subunit.

The protein localises to the periplasm. In terms of biological role, monoheme c-type cytochrome. Probable electron donor to membrane cytochrome oxidase and to periplasmic nitrite reductase. The protein is Cytochrome c-552 (cyt) of Nitrosomonas europaea (strain ATCC 19718 / CIP 103999 / KCTC 2705 / NBRC 14298).